Reading from the N-terminus, the 311-residue chain is Protein lifeguard 3 (311 aa).

Disordered stretches follow at residues 1–37 (MSNPSAPPPYEDRNPLYPGPPPPGGYGQPSVLPGGYP) and 50–72 (PAGYPQPMPPTHPMPMNYGPGHG). The span at 53–62 (YPQPMPPTHP) shows a compositional bias: pro residues. Residues Ser81 and Ser83 each carry the phosphoserine modification. 7 consecutive transmembrane segments (helical) span residues 110-130 (LLITVAIIAIFTFVEPVSAFV), 134-154 (VAVYYVSYAVFVVTYLILACC), 165-185 (IILLTLFTFAMGFMTGTISSM), 190-210 (AVIIAMIITAVVSISVTIFCF), 221-241 (GLFCVLGIVLLVTGIVTSIVL), 246-266 (VYWLHMLYAALGAICFTLFLA), and 286-306 (ITGALQIYTDIIYIFTFVLQL).

This sequence belongs to the BI1 family. LFG subfamily.

It localises to the membrane. The protein resides in the lysosome membrane. It is found in the endosome membrane. In terms of biological role, negatively regulates aortic matrix metalloproteinase-9 (MMP9) production and may play a protective role in vascular remodeling. The sequence is that of Protein lifeguard 3 (TMBIM1) from Homo sapiens (Human).